A 175-amino-acid polypeptide reads, in one-letter code: ATP-dependent protease subunit HslV (175 aa).

Thr-2 is a catalytic residue. The Na(+) site is built by Gly-158, Cys-161, and Thr-164.

It belongs to the peptidase T1B family. HslV subfamily. A double ring-shaped homohexamer of HslV is capped on each side by a ring-shaped HslU homohexamer. The assembly of the HslU/HslV complex is dependent on binding of ATP.

It localises to the cytoplasm. It catalyses the reaction ATP-dependent cleavage of peptide bonds with broad specificity.. Its activity is regulated as follows. Allosterically activated by HslU binding. In terms of biological role, protease subunit of a proteasome-like degradation complex believed to be a general protein degrading machinery. The polypeptide is ATP-dependent protease subunit HslV (Haemophilus influenzae (strain ATCC 51907 / DSM 11121 / KW20 / Rd)).